The sequence spans 541 residues: Ankyrin repeat domain-containing protein 13C (541 aa).

Positions M1–G20 are enriched in basic and acidic residues. Positions M1–K53 are disordered. Over residues D21 to A30 the composition is skewed to acidic residues. The span at A37–G52 shows a compositional bias: gly residues. 3 ANK repeats span residues P111–N142, H143–V172, and Q176–R205. S411 is modified (phosphoserine).

It localises to the endoplasmic reticulum membrane. Acts as a molecular chaperone for G protein-coupled receptors, regulating their biogenesis and exit from the ER. This is Ankyrin repeat domain-containing protein 13C (Ankrd13c) from Mus musculus (Mouse).